The sequence spans 276 residues: Undecaprenyl-diphosphatase (276 aa).

The next 6 membrane-spanning stretches (helical) occupy residues 43 to 63 (RAMAFNIIIQLAAILAVVWEF), 85 to 105 (GNLLLAFMPAVVLGVLFADLI), 109 to 129 (LFNPITVATALVVGGVIMLWA), 183 to 203 (AATEFSFFLAMPTMVGAAVYS), 214 to 234 (ADLPVFAIGFVTSFIFAMIAV), and 249 to 269 (FAWYRIVFGLLILATWQFGWV).

This sequence belongs to the UppP family.

The protein localises to the cell inner membrane. It carries out the reaction di-trans,octa-cis-undecaprenyl diphosphate + H2O = di-trans,octa-cis-undecaprenyl phosphate + phosphate + H(+). Functionally, catalyzes the dephosphorylation of undecaprenyl diphosphate (UPP). Confers resistance to bacitracin. This Pseudomonas putida (strain GB-1) protein is Undecaprenyl-diphosphatase.